We begin with the raw amino-acid sequence, 616 residues long: Chaperone protein HscA (616 aa).

Belongs to the heat shock protein 70 family.

In terms of biological role, chaperone involved in the maturation of iron-sulfur cluster-containing proteins. Has a low intrinsic ATPase activity which is markedly stimulated by HscB. Involved in the maturation of IscU. This chain is Chaperone protein HscA, found in Salmonella arizonae (strain ATCC BAA-731 / CDC346-86 / RSK2980).